Here is a 1020-residue protein sequence, read N- to C-terminus: Protein SCAR3 (1020 aa).

3 disordered regions span residues 167-198 (NLSQ…DMSR), 351-382 (DEKP…LRKR), and 802-827 (DYLS…GRKE). The span at 174 to 191 (KFQKDKKHCKMKKKKTSS) shows a compositional bias: basic residues. Basic and acidic residues predominate over residues 365–382 (FHSKDNENDKSESGLRKR). The segment covering 802–814 (DYLSDNHSLSNSE) has biased composition (polar residues). Residues 954–972 (ETGDFLQQIRTQQFNLRPV) form the WH2 domain.

Belongs to the SCAR/WAVE family. Binds BRK1. Interacts with SPK1, ABI1, ABI2, ABI3 and ABI4. As to expression, expressed in expanding cotyledons, expanding leaves and expanding siliques containing developing embryos. Detected in unopened flower buds. Reduced expression in mature leaves and mature cotyledons.

It localises to the cytoplasm. The protein localises to the cytoskeleton. Functionally, involved in regulation of actin and microtubule organization. Part of a WAVE complex that activates the Arp2/3 complex. Regulates trichome branch positioning and expansion. The protein is Protein SCAR3 (SCAR3) of Arabidopsis thaliana (Mouse-ear cress).